A 104-amino-acid chain; its full sequence is AVIToxin-VAR2 (104 aa).

A signal peptide spans 1–19 (MRSLLCAPLLLLLLSAGES). 5 disulfide bridges follow: cysteine 26–cysteine 38, cysteine 32–cysteine 50, cysteine 37–cysteine 78, cysteine 60–cysteine 86, and cysteine 80–cysteine 96.

It belongs to the AVIT (prokineticin) family. In terms of tissue distribution, expressed by the venom gland.

It localises to the secreted. Functionally, potent agonist for both PKR1/PROKR1 and PKR2/PROKR2. Potently contracts gastrointestinal (GI) smooth muscle. The chain is AVIToxin-VAR2 from Varanus varius (Lace monitor lizard).